Here is a 697-residue protein sequence, read N- to C-terminus: Alpha-1,4-glucan:maltose-1-phosphate maltosyltransferase (697 aa).

Alpha-maltose 1-phosphate is bound at residue Lys284. Positions 286–305 (RNNSVTAAPGDVGSPWAIGS) are disordered. Alpha-maltose 1-phosphate-binding residues include Gln344 and Asp379. Asp414 functions as the Nucleophile in the catalytic mechanism. Alpha-maltose 1-phosphate is bound at residue Asn415. The active-site Proton donor is the Glu443. Alpha-maltose 1-phosphate is bound at residue 553–554 (KY).

It belongs to the glycosyl hydrolase 13 family. GlgE subfamily. As to quaternary structure, homodimer.

The catalysed reaction is alpha-maltose 1-phosphate + [(1-&gt;4)-alpha-D-glucosyl](n) = [(1-&gt;4)-alpha-D-glucosyl](n+2) + phosphate. The protein operates within glycan biosynthesis; glycogen biosynthesis. The transfer reaction from maltose-1-P to glycogen is inhibited by micromolar amounts of inorganic phosphate or arsenate but is only slightly inhibited by millimolar concentrations of glucose-1-P, glucose-6-P, or inorganic pyrophosphate. Is also inhibited by ATP, by 1,4-dideoxy-1,4-imino-D-arabinitol (DIA), but not by isofagomine. Its function is as follows. Maltosyltransferase that uses maltose 1-phosphate (M1P) as the sugar donor to elongate linear or branched alpha-(1-&gt;4)-glucans. Is also able to catalyze the reverse reaction in vitro. Cannot use glucose 1-phosphate as substrate. Is involved in a branched alpha-glucan biosynthetic pathway from trehalose, together with TreS, Mak and GlgB. This chain is Alpha-1,4-glucan:maltose-1-phosphate maltosyltransferase (glgE), found in Mycolicibacterium smegmatis (strain ATCC 700084 / mc(2)155) (Mycobacterium smegmatis).